The chain runs to 523 residues: GMP synthase [glutamine-hydrolyzing] (523 aa).

Positions 18 to 208 (KILIVDFGGQ…LYNVCGAKGD (191 aa)) constitute a Glutamine amidotransferase type-1 domain. Residue Cys-95 is the Nucleophile of the active site. Active-site residues include His-182 and Glu-184. One can recognise a GMPS ATP-PPase domain in the interval 209 to 398 (WNMKSFLAEA…LGLPDYLVHR (190 aa)). 236-242 (SGGVDSS) lines the ATP pocket.

As to quaternary structure, homodimer.

The enzyme catalyses XMP + L-glutamine + ATP + H2O = GMP + L-glutamate + AMP + diphosphate + 2 H(+). It participates in purine metabolism; GMP biosynthesis; GMP from XMP (L-Gln route): step 1/1. Functionally, catalyzes the synthesis of GMP from XMP. This chain is GMP synthase [glutamine-hydrolyzing], found in Treponema denticola (strain ATCC 35405 / DSM 14222 / CIP 103919 / JCM 8153 / KCTC 15104).